Consider the following 60-residue polypeptide: Metallothionein A (60 aa).

Residues M1–C28 are beta. A divalent metal cation-binding residues include C4, C6, C12, C14, C18, C20, C23, C25, C28, C32, C33, C35, C36, C40, C43, C47, C49, C54, C58, and C59. The interval K29–Q60 is alpha.

It belongs to the metallothionein superfamily. Type 1 family.

Its function is as follows. Metallothioneins have a high content of cysteine residues that bind various heavy metals. The sequence is that of Metallothionein A (mta) from Chaenocephalus aceratus (Blackfin icefish).